A 212-amino-acid chain; its full sequence is Large ribosomal subunit protein uL3 (212 aa).

Residues 135-155 are compositionally biased toward polar residues; sequence ATHGNSVSHRAHGSTGQNQSP. The interval 135 to 162 is disordered; it reads ATHGNSVSHRAHGSTGQNQSPGKVFKGK. Q153 is subject to N5-methylglutamine.

The protein belongs to the universal ribosomal protein uL3 family. As to quaternary structure, part of the 50S ribosomal subunit. Forms a cluster with proteins L14 and L19. Post-translationally, methylated by PrmB.

Its function is as follows. One of the primary rRNA binding proteins, it binds directly near the 3'-end of the 23S rRNA, where it nucleates assembly of the 50S subunit. The chain is Large ribosomal subunit protein uL3 from Psychrobacter arcticus (strain DSM 17307 / VKM B-2377 / 273-4).